Here is a 347-residue protein sequence, read N- to C-terminus: Elongation factor Ts (347 aa).

The involved in Mg(2+) ion dislocation from EF-Tu stretch occupies residues Thr80 to Val83.

It belongs to the EF-Ts family.

The protein resides in the cytoplasm. Its function is as follows. Associates with the EF-Tu.GDP complex and induces the exchange of GDP to GTP. It remains bound to the aminoacyl-tRNA.EF-Tu.GTP complex up to the GTP hydrolysis stage on the ribosome. This chain is Elongation factor Ts, found in Streptococcus gordonii (strain Challis / ATCC 35105 / BCRC 15272 / CH1 / DL1 / V288).